A 635-amino-acid polypeptide reads, in one-letter code: Threonine--tRNA ligase (635 aa).

Residues 1–58 (MIHVTCNQEAFELPEGASAMDLANKMKQSHCFVGALINDQEKDLSTTLQDGDTVLFLT) form the TGS domain. Residues 237–528 (DHRVLGTKLD…LIEHFKGRFP (292 aa)) form a catalytic region. Positions 328, 379, and 505 each coordinate Zn(2+).

The protein belongs to the class-II aminoacyl-tRNA synthetase family. In terms of assembly, homodimer. It depends on Zn(2+) as a cofactor.

It localises to the cytoplasm. The catalysed reaction is tRNA(Thr) + L-threonine + ATP = L-threonyl-tRNA(Thr) + AMP + diphosphate + H(+). Functionally, catalyzes the attachment of threonine to tRNA(Thr) in a two-step reaction: L-threonine is first activated by ATP to form Thr-AMP and then transferred to the acceptor end of tRNA(Thr). Also edits incorrectly charged L-seryl-tRNA(Thr). The sequence is that of Threonine--tRNA ligase from Chlamydia trachomatis serovar L2b (strain UCH-1/proctitis).